The chain runs to 265 residues: Mlc titration factor A (265 aa).

Residues His111, His148, His152, and Glu211 each coordinate Zn(2+).

It belongs to the MtfA family. Interacts with Mlc. The cofactor is Zn(2+).

Its subcellular location is the cytoplasm. Involved in the modulation of the activity of the glucose-phosphotransferase system (glucose-PTS). Interacts with the transcriptional repressor Mlc, preventing its interaction with DNA and leading to the modulation of expression of genes regulated by Mlc, including ptsG, which encodes the PTS system glucose-specific EIICB component. Its function is as follows. Shows zinc-dependent metallopeptidase activity. The sequence is that of Mlc titration factor A from Enterobacter sp. (strain 638).